The sequence spans 292 residues: Bifunctional protein FolD (292 aa).

NADP(+) contacts are provided by residues 169–171, threonine 196, and valine 237; that span reads GRG.

It belongs to the tetrahydrofolate dehydrogenase/cyclohydrolase family. In terms of assembly, homodimer.

It carries out the reaction (6R)-5,10-methylene-5,6,7,8-tetrahydrofolate + NADP(+) = (6R)-5,10-methenyltetrahydrofolate + NADPH. It catalyses the reaction (6R)-5,10-methenyltetrahydrofolate + H2O = (6R)-10-formyltetrahydrofolate + H(+). The protein operates within one-carbon metabolism; tetrahydrofolate interconversion. Its function is as follows. Catalyzes the oxidation of 5,10-methylenetetrahydrofolate to 5,10-methenyltetrahydrofolate and then the hydrolysis of 5,10-methenyltetrahydrofolate to 10-formyltetrahydrofolate. The protein is Bifunctional protein FolD of Bifidobacterium longum (strain NCC 2705).